The primary structure comprises 199 residues: Probable thymidylate kinase (199 aa).

Residue 9–16 (GIDGCGKT) coordinates ATP.

It belongs to the thymidylate kinase family.

It catalyses the reaction dTMP + ATP = dTDP + ADP. This Methanococcus maripaludis (strain C6 / ATCC BAA-1332) protein is Probable thymidylate kinase.